We begin with the raw amino-acid sequence, 341 residues long: Binder of USO1 and GRH1 protein 1 (341 aa).

A disordered region spans residues methionine 1 to glycine 181. Serine 2 bears the N-acetylserine mark. The stretch at serine 2–serine 41 forms a coiled coil. The span at aspartate 7–lysine 26 shows a compositional bias: basic and acidic residues. Positions lysine 27 to lysine 39 are enriched in basic residues. The span at lysine 69 to asparagine 78 shows a compositional bias: polar residues. Positions aspartate 79–glutamate 91 are enriched in acidic residues. The residue at position 87 (serine 87) is a Phosphoserine. Basic and acidic residues predominate over residues glycine 118–glutamate 132. Residues valine 158–glutamate 171 show a composition bias toward polar residues. Position 170 is a phosphoserine (serine 170). Residues leucine 188 to arginine 272 are a coiled coil. Phosphothreonine is present on threonine 292.

Interacts with GRH1 (via C-terminus), probably forming a heterooligomer consisting of a GRH1 dimer and a BUG1 dimer.

It localises to the cytoplasm. Its subcellular location is the golgi apparatus. The protein resides in the cis-Golgi network membrane. Involved in ER to Golgi vesicle-mediated transport by either facilitating USO1-dependent and -independent tethering or increasing target accuracy of fusion events of COPII-coated vesicles. The sequence is that of Binder of USO1 and GRH1 protein 1 from Saccharomyces cerevisiae (strain ATCC 204508 / S288c) (Baker's yeast).